The chain runs to 647 residues: Macrolide export ATP-binding/permease protein MacB (647 aa).

The ABC transporter domain maps to 5–243; the sequence is LELKGIERSY…TQTPSLTSKI (239 aa). 41–48 is an ATP binding site; it reads GASGSGKS. Transmembrane regions (helical) follow at residues 272–292, 522–542, 576–596, and 610–630; these read LLTM…LVIG, LFLT…VMNI, ILVC…IAFI, and PIAL…FGFL.

The protein belongs to the ABC transporter superfamily. Macrolide exporter (TC 3.A.1.122) family. As to quaternary structure, homodimer. Part of the tripartite efflux system MacAB-TolC, which is composed of an inner membrane transporter, MacB, a periplasmic membrane fusion protein, MacA, and an outer membrane component, TolC. The complex forms a large protein conduit and can translocate molecules across both the inner and outer membranes. Interacts with MacA.

It localises to the cell inner membrane. Part of the tripartite efflux system MacAB-TolC. MacB is a non-canonical ABC transporter that contains transmembrane domains (TMD), which form a pore in the inner membrane, and an ATP-binding domain (NBD), which is responsible for energy generation. Confers resistance against macrolides. This chain is Macrolide export ATP-binding/permease protein MacB, found in Photorhabdus laumondii subsp. laumondii (strain DSM 15139 / CIP 105565 / TT01) (Photorhabdus luminescens subsp. laumondii).